The primary structure comprises 1084 residues: MTNFKFSLLACSIAFALNASTVYAAQPTNQPTNQPTNQPTNQPTNQPTNQPTNQPTNQPTNQPTNQPTNQPTNQNSNVSEQLEQINVSGSSENINIKEKKVGETQISAKKLAKQQASDSRDLVRYETGITVVETGRTGASGYAVRGVDENRVGIMVDGLRQAETLSSQGFKELFEGYGNFNNTRNSIEIENVKTATITKGADSLKSGSGALGGSVIFETKDARDYLIDKDYYLSYKRGYQTMNNQNLKTLTLAGRSKKFDILIIDTTRDGHEIENYDYKIYPNKQADLRAVGPTREKADPYQITRQSTLIKLGFQPNENHRLSVALDDSTLETKGIDLSYALRPYSTAGNEKYGERIINDQSKRKNIQFSYENFSQTPFWDHIKLSYSSQKITNKARSDEYCHQSTCNGVSNPQGLHLVEEGGVYKIVDKNGDKLTYNKNAGWYGQFQNKNGENVDNDIDSTGGSLDSVLIDCERLNCKNKFQVFVEKDEEGKDKYEYEERDIIVETLPNGKKYGKITLKKGKTPLWDDVYQEESARFLFPKSYGYSTDFVNDRDLNTNTQQIKLDLDKEFSLWHTQHSLKYGGFYEKTLKSMVNHQYNTVANVQWWAGNFFCNKLENGKRTPAPDYSHRCSLMNTDKGKETYLIPVTTKNNVLYFGDNVQLTSWLGLDLNYRYDHVKYLPSYDEKIPVPNGLITGLFKKFGPKDYVYGSKYSKPADYTDCTYNSDCYKKNFKDNLALLLRKTDYKHHSYNLGLNLDPTDWLRVQLKYANGFRAPTSDEIYMTFKHPQFSIQPNTDLKAETSKTKEVAFTFYKNSSYITLNAFQNDYRNFIDLVEVGPRPIEEGSTIAYPFHQNQNRDRARVRGIEIASRLEMGDLFEKLQGFHLGYKFTYQKGRIKDNGLNPKYKEFLELNKDKHPEYEAIARKPQPMNALQPTTSVYNIGYDAPSQKWGVDMYITNVAAKKAKDSFNSQWTSMVKRKEKIYGNEKDAEASTANGKEVKDSRGLWRNNRYTVIDTIAYWKPIKNLTFTAGVYNLTNKKYLTWDSARSIRHLGTINRVETATGKGLNRFYAPGRNYRMSVQFEF.

The N-terminal stretch at 1 to 24 is a signal peptide; that stretch reads MTNFKFSLLACSIAFALNASTVYA. A run of 12 repeats spans residues 26–29, 30–33, 34–37, 38–41, 42–45, 46–49, 50–53, 54–57, 58–61, 62–65, 66–69, and 70–73. The segment at 26-73 is 12 X 4 AA tandem repeats of Q-P-T-N; the sequence is QPTNQPTNQPTNQPTNQPTNQPTNQPTNQPTNQPTNQPTNQPTNQPTN. Low complexity predominate over residues 26–75; the sequence is QPTNQPTNQPTNQPTNQPTNQPTNQPTNQPTNQPTNQPTNQPTNQPTNQN. The disordered stretch occupies residues 26–77; it reads QPTNQPTNQPTNQPTNQPTNQPTNQPTNQPTNQPTNQPTNQPTNQPTNQNSN. The TonB box signature appears at 83–90; it reads EQINVSGS. The TBDR plug domain maps to 95–220; that stretch reads NIKEKKVGET…LGGSVIFETK (126 aa). Residues 228-1084 form the TBDR beta-barrel domain; that stretch reads DKDYYLSYKR…NYRMSVQFEF (857 aa). The TonB C-terminal box signature appears at 1067 to 1084; sequence NRFYAPGRNYRMSVQFEF.

This sequence belongs to the TonB-dependent receptor family. Hemoglobin/haptoglobin binding protein subfamily.

The protein localises to the cell outer membrane. Functionally, acts as a receptor for hemoglobin or the hemoglobin/haptoglobin complex of the human host and is required for heme uptake. The chain is Probable hemoglobin and hemoglobin-haptoglobin-binding protein 3 from Haemophilus influenzae (strain ATCC 51907 / DSM 11121 / KW20 / Rd).